Consider the following 1077-residue polypeptide: Ubiquitin carboxyl-terminal hydrolase 28 (1077 aa).

A disordered region spans residues Asp60 to Gly80. Ser67 carries the phosphoserine modification. Residues Asp97–Ile116 form the UIM domain. Residue Lys99 forms a Glycyl lysine isopeptide (Lys-Gly) (interchain with G-Cter in SUMO2) linkage. The USP domain maps to Val162–Asp650. Catalysis depends on Cys171, which acts as the Nucleophile. Ser375 is subject to Phosphoserine. Residues His477 to Asp535 are disordered. Residues Ser481–Thr501 are compositionally biased toward low complexity. A compositionally biased stretch (polar residues) spans Pro514–Met524. The residue at position 550 (Ser550) is a Phosphoserine. The Proton acceptor role is filled by His600. The disordered stretch occupies residues Glu697–Ser728. Residues Glu707 to Ser724 show a composition bias toward low complexity. Ser714 carries the phosphoserine modification. Lys759 is covalently cross-linked (Glycyl lysine isopeptide (Lys-Gly) (interchain with G-Cter in SUMO2)). Phosphothreonine is present on Thr1048.

This sequence belongs to the peptidase C19 family. USP28 subfamily. As to quaternary structure, interacts with ZNF304. Interacts with PRKD1. Interacts with TP53BP1. Interacts with isoform 1 of FBXW7; following DNA damage, dissociates from FBXW7 leading to degradation of MYC. Post-translationally, degraded upon nickel ion level or hypoxia exposure. Phosphorylated upon DNA damage at Ser-67 and Ser-714, by ATM or ATR. Phosphorylated by PRKD1.

It is found in the nucleus. It localises to the nucleoplasm. It carries out the reaction Thiol-dependent hydrolysis of ester, thioester, amide, peptide and isopeptide bonds formed by the C-terminal Gly of ubiquitin (a 76-residue protein attached to proteins as an intracellular targeting signal).. In terms of biological role, deubiquitinase involved in DNA damage response checkpoint and MYC proto-oncogene stability. Involved in DNA damage induced apoptosis by specifically deubiquitinating proteins of the DNA damage pathway such as CLSPN. Also involved in G2 DNA damage checkpoint, by deubiquitinating CLSPN, and preventing its degradation by the anaphase promoting complex/cyclosome (APC/C). In contrast, it does not deubiquitinate PLK1. Specifically deubiquitinates MYC in the nucleoplasm, leading to prevent MYC degradation by the proteasome: acts by specifically interacting with isoform 1 of FBXW7 (FBW7alpha) in the nucleoplasm and counteracting ubiquitination of MYC by the SCF(FBW7) complex. In contrast, it does not interact with isoform 4 of FBXW7 (FBW7gamma) in the nucleolus, allowing MYC degradation and explaining the selective MYC degradation in the nucleolus. Deubiquitinates ZNF304, hence preventing ZNF304 degradation by the proteasome and leading to the activated KRAS-mediated promoter hypermethylation and transcriptional silencing of tumor suppressor genes (TSGs) in a subset of colorectal cancers (CRC) cells. In Homo sapiens (Human), this protein is Ubiquitin carboxyl-terminal hydrolase 28 (USP28).